Consider the following 78-residue polypeptide: Protein Class8-like (78 aa).

A signal peptide spans 1–19 (MRTLVVLLIGAVLLCSANA). The propeptide occupies 20-36 (FLDELLAESVNDMTDKR). The region spanning 38-78 (CFDKYKSNICGGVISPAHCVRRSGRMAKFAKENCAHFCGFC) is the ShKT domain. 3 disulfides stabilise this stretch: C38–C78, C47–C71, and C56–C75.

In terms of tissue distribution, expressed in ganglion neurons residing in the mesoglea (observed in both planulae and primary polyps). Not expressed in nematocytes.

Its function is as follows. Probable neuropeptide. This Nematostella vectensis (Starlet sea anemone) protein is Protein Class8-like.